Reading from the N-terminus, the 275-residue chain is Elongation factor Ts (275 aa).

The tract at residues 76-79 (TDFV) is involved in Mg(2+) ion dislocation from EF-Tu.

It belongs to the EF-Ts family.

The protein resides in the cytoplasm. Functionally, associates with the EF-Tu.GDP complex and induces the exchange of GDP to GTP. It remains bound to the aminoacyl-tRNA.EF-Tu.GTP complex up to the GTP hydrolysis stage on the ribosome. This chain is Elongation factor Ts, found in Corynebacterium kroppenstedtii (strain DSM 44385 / JCM 11950 / CIP 105744 / CCUG 35717).